We begin with the raw amino-acid sequence, 21 residues long: Kassinatuerin-1 (21 aa).

Ile-21 carries the post-translational modification Isoleucine amide.

As to expression, expressed by the skin dorsal glands.

Its subcellular location is the secreted. In terms of biological role, shows broad-spectrum antimicrobial activity against the Gram-negative bacterium E.coli (MIC=6.25 uM), K.pneumoniae (MIC=25 uM), E.cloacae (MIC=6.25 uM), P.aeruginosa (MIC=25 uM), the Gram-positive bacterium S.aureus (MIC=6.25 uM), S.epidermidis (MIC=6.25 uM), E.faecalis (MIC=12.5 uM), and the fungus C.albicans (MIC=100 uM). Has no antimicrobial effect against P.mirabilis (MIC&gt;100 uM). Has relatively high cytolytic and hemolytic activities. Its alpha-helix has considerable amphipathic character. This Kassina senegalensis (Senegal running frog) protein is Kassinatuerin-1.